Consider the following 210-residue polypeptide: Endonuclease III (210 aa).

The HhH domain maps to 108–127 (RIELESLPGVGRKTANIILN). [4Fe-4S] cluster is bound by residues cysteine 187, cysteine 194, cysteine 197, and cysteine 203.

This sequence belongs to the Nth/MutY family. The cofactor is [4Fe-4S] cluster.

It catalyses the reaction 2'-deoxyribonucleotide-(2'-deoxyribose 5'-phosphate)-2'-deoxyribonucleotide-DNA = a 3'-end 2'-deoxyribonucleotide-(2,3-dehydro-2,3-deoxyribose 5'-phosphate)-DNA + a 5'-end 5'-phospho-2'-deoxyribonucleoside-DNA + H(+). DNA repair enzyme that has both DNA N-glycosylase activity and AP-lyase activity. The DNA N-glycosylase activity releases various damaged pyrimidines from DNA by cleaving the N-glycosidic bond, leaving an AP (apurinic/apyrimidinic) site. The AP-lyase activity cleaves the phosphodiester bond 3' to the AP site by a beta-elimination, leaving a 3'-terminal unsaturated sugar and a product with a terminal 5'-phosphate. The sequence is that of Endonuclease III from Buchnera aphidicola subsp. Acyrthosiphon pisum (strain APS) (Acyrthosiphon pisum symbiotic bacterium).